A 536-amino-acid chain; its full sequence is 2-isopropylmalate synthase (536 aa).

One can recognise a Pyruvate carboxyltransferase domain in the interval 8-273 (VLIFDTTLRD…FFGKDSESPT (266 aa)). Mn(2+) contacts are provided by Asp-17, His-208, His-210, and Asn-244. Residues 408-536 (KLHLVQVSCG…PQHDVVKANL (129 aa)) are regulatory domain.

It belongs to the alpha-IPM synthase/homocitrate synthase family. LeuA type 1 subfamily. In terms of assembly, homodimer. It depends on Mn(2+) as a cofactor.

The protein localises to the cytoplasm. It catalyses the reaction 3-methyl-2-oxobutanoate + acetyl-CoA + H2O = (2S)-2-isopropylmalate + CoA + H(+). It functions in the pathway amino-acid biosynthesis; L-leucine biosynthesis; L-leucine from 3-methyl-2-oxobutanoate: step 1/4. In terms of biological role, catalyzes the condensation of the acetyl group of acetyl-CoA with 3-methyl-2-oxobutanoate (2-ketoisovalerate) to form 3-carboxy-3-hydroxy-4-methylpentanoate (2-isopropylmalate). This is 2-isopropylmalate synthase from Prochlorococcus marinus (strain SARG / CCMP1375 / SS120).